The following is a 22-amino-acid chain: Oxygen-evolving enhancer protein 2 (22 aa).

This sequence belongs to the PsbP family.

The protein localises to the plastid. It localises to the chloroplast thylakoid membrane. May be involved in the regulation of photosystem II. The sequence is that of Oxygen-evolving enhancer protein 2 from Physcomitrium patens (Spreading-leaved earth moss).